Reading from the N-terminus, the 452-residue chain is Pup--protein ligase (452 aa).

Glutamate 9 lines the Mg(2+) pocket. Arginine 53 lines the ATP pocket. Residue tyrosine 55 participates in Mg(2+) binding. Catalysis depends on aspartate 57, which acts as the Proton acceptor. A Mg(2+)-binding site is contributed by glutamate 63. ATP is bound by residues threonine 66 and tryptophan 419.

Belongs to the Pup ligase/Pup deamidase family. Pup-conjugating enzyme subfamily.

The enzyme catalyses ATP + [prokaryotic ubiquitin-like protein]-L-glutamate + [protein]-L-lysine = ADP + phosphate + N(6)-([prokaryotic ubiquitin-like protein]-gamma-L-glutamyl)-[protein]-L-lysine.. The protein operates within protein degradation; proteasomal Pup-dependent pathway. Its pathway is protein modification; protein pupylation. Functionally, catalyzes the covalent attachment of the prokaryotic ubiquitin-like protein modifier Pup to the proteasomal substrate proteins, thereby targeting them for proteasomal degradation. This tagging system is termed pupylation. The ligation reaction involves the side-chain carboxylate of the C-terminal glutamate of Pup and the side-chain amino group of a substrate lysine. The polypeptide is Pup--protein ligase (Mycobacterium leprae (strain Br4923)).